The primary structure comprises 947 residues: Bifunctional glutamine synthetase adenylyltransferase/adenylyl-removing enzyme (947 aa).

Residues 1–440 form an adenylyl removase region; that stretch reads MTPLSSPLSQ…VFNELIGDDE (440 aa). Positions 450–947 are adenylyl transferase; it reads SEPWREVWQD…ASWRKWLVAV (498 aa).

It belongs to the GlnE family. Mg(2+) serves as cofactor.

It catalyses the reaction [glutamine synthetase]-O(4)-(5'-adenylyl)-L-tyrosine + phosphate = [glutamine synthetase]-L-tyrosine + ADP. It carries out the reaction [glutamine synthetase]-L-tyrosine + ATP = [glutamine synthetase]-O(4)-(5'-adenylyl)-L-tyrosine + diphosphate. In terms of biological role, involved in the regulation of glutamine synthetase GlnA, a key enzyme in the process to assimilate ammonia. When cellular nitrogen levels are high, the C-terminal adenylyl transferase (AT) inactivates GlnA by covalent transfer of an adenylyl group from ATP to specific tyrosine residue of GlnA, thus reducing its activity. Conversely, when nitrogen levels are low, the N-terminal adenylyl removase (AR) activates GlnA by removing the adenylyl group by phosphorolysis, increasing its activity. The regulatory region of GlnE binds the signal transduction protein PII (GlnB) which indicates the nitrogen status of the cell. The polypeptide is Bifunctional glutamine synthetase adenylyltransferase/adenylyl-removing enzyme (Salmonella agona (strain SL483)).